Reading from the N-terminus, the 308-residue chain is Prephenate dehydratase (308 aa).

The region spanning 3–187 (RITYLGPEGT…AHTRFVLVGR (185 aa)) is the Prephenate dehydratase domain. In terms of domain architecture, ACT spans 201 to 278 (SVVLGLGNVP…EDVRYLGSWP (78 aa)).

Homodimer.

It carries out the reaction prephenate + H(+) = 3-phenylpyruvate + CO2 + H2O. It functions in the pathway amino-acid biosynthesis; L-phenylalanine biosynthesis; phenylpyruvate from prephenate: step 1/1. The sequence is that of Prephenate dehydratase (pheA) from Mycobacteroides abscessus (strain ATCC 19977 / DSM 44196 / CCUG 20993 / CIP 104536 / JCM 13569 / NCTC 13031 / TMC 1543 / L948) (Mycobacterium abscessus).